The sequence spans 53 residues: Rubredoxin-1 (53 aa).

In terms of domain architecture, Rubredoxin-like spans 1–53 (MEKFVCDVCGYIYDPVVGDPDNGVAPGTKFKDIPDTWVCPLCKLDKTHFSKVE). 4 residues coordinate Fe cation: cysteine 6, cysteine 9, cysteine 39, and cysteine 42.

The protein belongs to the rubredoxin family. Fe(3+) is required as a cofactor.

Rubredoxin is a small nonheme, iron protein lacking acid-labile sulfide. Its single Fe, chelated to 4 Cys, functions as an electron acceptor and may also stabilize the conformation of the molecule. The chain is Rubredoxin-1 (rubR1) from Clostridium perfringens (strain 13 / Type A).